The primary structure comprises 555 residues: Glucose-6-phosphate isomerase (555 aa).

Glu-355 acts as the Proton donor in catalysis. Active-site residues include His-386 and Lys-514.

It belongs to the GPI family.

It localises to the cytoplasm. It carries out the reaction alpha-D-glucose 6-phosphate = beta-D-fructose 6-phosphate. The protein operates within carbohydrate biosynthesis; gluconeogenesis. It functions in the pathway carbohydrate degradation; glycolysis; D-glyceraldehyde 3-phosphate and glycerone phosphate from D-glucose: step 2/4. Its function is as follows. Catalyzes the reversible isomerization of glucose-6-phosphate to fructose-6-phosphate. This chain is Glucose-6-phosphate isomerase, found in Buchnera aphidicola subsp. Schizaphis graminum (strain Sg).